The chain runs to 49 residues: Putative exported peptide YydF (49 aa).

Its function is as follows. Suggested to be the precursor for an exported, modified peptide that has antimicrobial and/or signaling properties. Synthesis requires YydG and YydH; the peptide is proposed to be exported by the YydIJ transporter. In the absence of the transporter, the modified peptide activates the LiaRS two-component regulatory system, possibly by eliciting cell envelope stress. This activation can occur in trans in cocultured cells lacking either the transporter or the whole operon. This chain is Putative exported peptide YydF (yydF), found in Bacillus subtilis (strain 168).